The chain runs to 250 residues: Peptidyl-tRNA hydrolase (250 aa).

Tyrosine 14 contacts tRNA. Catalysis depends on histidine 19, which acts as the Proton acceptor. TRNA is bound by residues phenylalanine 64, asparagine 66, and asparagine 112. Residues 192 to 250 form a disordered region; the sequence is MGDGNQRPGGVKTDPAQLEKAPPKAQSHIRQARQNQKKPNIPESGPMAEMLKKLLGKKD. Polar residues predominate over residues 219 to 229; sequence HIRQARQNQKK. Positions 241-250 are enriched in basic and acidic residues; the sequence is MLKKLLGKKD.

This sequence belongs to the PTH family. As to quaternary structure, monomer.

The protein localises to the cytoplasm. It carries out the reaction an N-acyl-L-alpha-aminoacyl-tRNA + H2O = an N-acyl-L-amino acid + a tRNA + H(+). Functionally, hydrolyzes ribosome-free peptidyl-tRNAs (with 1 or more amino acids incorporated), which drop off the ribosome during protein synthesis, or as a result of ribosome stalling. In terms of biological role, catalyzes the release of premature peptidyl moieties from peptidyl-tRNA molecules trapped in stalled 50S ribosomal subunits, and thus maintains levels of free tRNAs and 50S ribosomes. The sequence is that of Peptidyl-tRNA hydrolase from Brucella canis (strain ATCC 23365 / NCTC 10854 / RM-666).